Reading from the N-terminus, the 273-residue chain is F-actin-capping protein subunit alpha (273 aa).

Belongs to the F-actin-capping protein alpha subunit family. As to quaternary structure, heterodimer of an alpha and a beta subunit.

Its subcellular location is the cytoplasm. The protein localises to the cytoskeleton. In terms of biological role, F-actin-capping proteins bind in a Ca(2+)-independent manner to the fast growing ends of actin filaments (barbed end) thereby blocking the exchange of subunits at these ends. Unlike other capping proteins (such as gelsolin and severin), these proteins do not sever actin filaments. The protein is F-actin-capping protein subunit alpha (CAP1) of Gibberella zeae (strain ATCC MYA-4620 / CBS 123657 / FGSC 9075 / NRRL 31084 / PH-1) (Wheat head blight fungus).